We begin with the raw amino-acid sequence, 473 residues long: BPI fold-containing family B member 3 (473 aa).

Positions 1-20 (MMPGVYALLLLWGLATPCLG) are cleaved as a signal peptide. An N-linked (GlcNAc...) asparagine glycan is attached at N139. The cysteines at positions 161 and 196 are disulfide-linked.

It belongs to the BPI/LBP/Plunc superfamily. BPI/LBP family. In terms of tissue distribution, highly expressed in olfactory mucosa but undetectable in thymus, kidney, lung, brain, spleen and liver.

The protein localises to the secreted. In terms of biological role, may have the capacity to recognize and bind specific classes of odorants. May act as a carrier molecule, transporting odorants across the mucus layer to access receptor sites. May serve as a primary defense mechanism by recognizing and removing potentially harmful odorants or pathogenic microorganisms from the mucosa or clearing excess odorant from mucus to enable new odorant stimuli to be received. The chain is BPI fold-containing family B member 3 from Rattus norvegicus (Rat).